Here is a 116-residue protein sequence, read N- to C-terminus: Immunoglobulin heavy variable 3-66 (116 aa).

The signal sequence occupies residues 1-19 (MEFGLSWVFLVAILKGVQC). A framework-1 region spans residues 20–44 (EVQLVESGGGLIQPGGSLRLSCAAS). One can recognise an Ig-like domain in the interval 20–116 (EVQLVESGGG…EDTAVYYCAR (97 aa)). An intrachain disulfide couples Cys41 to Cys114. The segment at 45–52 (GFTVSSNY) is complementarity-determining-1. The segment at 53 to 69 (MSWVRQAPGKGLEWVSV) is framework-2. Residues 70–76 (IYSCGST) are complementarity-determining-2. Residues 77–114 (YYADSVKGRFTISRDNSKNTLYLQMNSLRAEDTAVYYC) form a framework-3 region. The tract at residues 115–116 (AR) is complementarity-determining-3.

As to quaternary structure, immunoglobulins are composed of two identical heavy chains and two identical light chains; disulfide-linked.

It is found in the secreted. Its subcellular location is the cell membrane. Functionally, v region of the variable domain of immunoglobulin heavy chains that participates in the antigen recognition. Immunoglobulins, also known as antibodies, are membrane-bound or secreted glycoproteins produced by B lymphocytes. In the recognition phase of humoral immunity, the membrane-bound immunoglobulins serve as receptors which, upon binding of a specific antigen, trigger the clonal expansion and differentiation of B lymphocytes into immunoglobulins-secreting plasma cells. Secreted immunoglobulins mediate the effector phase of humoral immunity, which results in the elimination of bound antigens. The antigen binding site is formed by the variable domain of one heavy chain, together with that of its associated light chain. Thus, each immunoglobulin has two antigen binding sites with remarkable affinity for a particular antigen. The variable domains are assembled by a process called V-(D)-J rearrangement and can then be subjected to somatic hypermutations which, after exposure to antigen and selection, allow affinity maturation for a particular antigen. The protein is Immunoglobulin heavy variable 3-66 of Homo sapiens (Human).